The following is a 202-amino-acid chain: IMP cyclohydrolase (202 aa).

This sequence belongs to the archaeal IMP cyclohydrolase family.

The catalysed reaction is IMP + H2O = 5-formamido-1-(5-phospho-D-ribosyl)imidazole-4-carboxamide. It functions in the pathway purine metabolism; IMP biosynthesis via de novo pathway; IMP from 5-formamido-1-(5-phospho-D-ribosyl)imidazole-4-carboxamide: step 1/1. Functionally, catalyzes the cyclization of 5-formylamidoimidazole-4-carboxamide ribonucleotide to IMP. The protein is IMP cyclohydrolase (purO) of Methanocaldococcus jannaschii (strain ATCC 43067 / DSM 2661 / JAL-1 / JCM 10045 / NBRC 100440) (Methanococcus jannaschii).